The following is a 343-amino-acid chain: L-threonine 3-dehydrogenase (343 aa).

Position 40 (cysteine 40) interacts with Zn(2+). Active-site charge relay system residues include threonine 42 and histidine 45. Zn(2+) contacts are provided by histidine 65, glutamate 66, cysteine 95, cysteine 98, cysteine 101, and cysteine 109. Residues isoleucine 177, aspartate 197, arginine 202, 264-266 (LGI), and 288-289 (IY) contribute to the NAD(+) site.

The protein belongs to the zinc-containing alcohol dehydrogenase family. Homotetramer. Zn(2+) serves as cofactor.

The protein localises to the cytoplasm. It carries out the reaction L-threonine + NAD(+) = (2S)-2-amino-3-oxobutanoate + NADH + H(+). It functions in the pathway amino-acid degradation; L-threonine degradation via oxydo-reductase pathway; glycine from L-threonine: step 1/2. Functionally, catalyzes the NAD(+)-dependent oxidation of L-threonine to 2-amino-3-ketobutyrate. The protein is L-threonine 3-dehydrogenase of Vibrio vulnificus (strain CMCP6).